The following is a 181-amino-acid chain: Large ribosomal subunit protein uL30 (181 aa).

The protein belongs to the universal ribosomal protein uL30 family. As to quaternary structure, part of the 50S ribosomal subunit.

This chain is Large ribosomal subunit protein uL30, found in Hyperthermus butylicus (strain DSM 5456 / JCM 9403 / PLM1-5).